The primary structure comprises 501 residues: Sensor histidine kinase PdtaS (501 aa).

Residues 4 to 150 (LGDLLAEHTV…HLETAYRLCA (147 aa)) are GAF. The tract at residues 179-291 (DGFIRLDVDG…TEVKRRDRAL (113 aa)) is PAS-like. In terms of domain architecture, Histidine kinase spans 300–495 (EIHHRVKNNL…DVVLRVPVGR (196 aa)). His303 bears the Phosphohistidine; by autocatalysis mark.

Post-translationally, autophosphorylated.

It localises to the cytoplasm. The catalysed reaction is ATP + protein L-histidine = ADP + protein N-phospho-L-histidine.. In terms of biological role, member of the two-component regulatory system PdtaR/PdtaS. This two-component system plays an essential role in mycobacterial adaptation to poor nutrient conditions. Nutrient deprivation results in increasing intracellular concentrations of cyclic diguanosine monophosphate (c-di-GMP), which binds to the PdtaS sensor and promotes its autophosphorylation, leading to the activation of the signaling cascade. The phosphate group is then transferred to PdtaR. Functionally, in addition, the PdtaR/PdtaS two-component system controls copper and nitric oxide (NO) resistance downstream of the intramembrane protease Rip1. This coupled Rip1/PdtaS/PdtaR circuit controls NO resistance and acute lung infection in mice by relieving PdtaR/PdtaS-mediated repression of isonitrile chalkophore biosynthesis. Two signals are required to fully inactivate the PdtaR/PdtaS system and mediate NO resistance: a cytoplasmic inhibitory signal through the PdtaS kinase mediated by direct sensing of NO and the production of PPE1-5', an NO-induced small RNA, to sequester PdtaR. The polypeptide is Sensor histidine kinase PdtaS (pdtaS) (Mycobacterium tuberculosis (strain CDC 1551 / Oshkosh)).